A 496-amino-acid polypeptide reads, in one-letter code: Glycogen synthase (496 aa).

Residue Lys24 participates in ADP-alpha-D-glucose binding.

This sequence belongs to the glycosyltransferase 1 family. Bacterial/plant glycogen synthase subfamily.

The enzyme catalyses [(1-&gt;4)-alpha-D-glucosyl](n) + ADP-alpha-D-glucose = [(1-&gt;4)-alpha-D-glucosyl](n+1) + ADP + H(+). Its pathway is glycan biosynthesis; glycogen biosynthesis. Its function is as follows. Synthesizes alpha-1,4-glucan chains using ADP-glucose. The chain is Glycogen synthase from Nitrosospira multiformis (strain ATCC 25196 / NCIMB 11849 / C 71).